Reading from the N-terminus, the 542-residue chain is CTP synthase (542 aa).

Positions 1-265 (MARYVFITGG…DSEVLSAFGI (265 aa)) are amidoligase domain. Ser13 lines the CTP pocket. A UTP-binding site is contributed by Ser13. 14 to 19 (SLGKGI) provides a ligand contact to ATP. An L-glutamine-binding site is contributed by Tyr54. Asp71 contacts ATP. Residues Asp71 and Glu139 each coordinate Mg(2+). Residues 146–148 (DIE), 186–191 (KTKPTQ), and Lys222 each bind CTP. Residues 186–191 (KTKPTQ) and Lys222 each bind UTP. Residues 291-541 (TIAVVGKYTG…IEAAIEQSRL (251 aa)) form the Glutamine amidotransferase type-1 domain. Gly353 contributes to the L-glutamine binding site. Catalysis depends on Cys380, which acts as the Nucleophile; for glutamine hydrolysis. L-glutamine is bound by residues 381–384 (FGMQ), Glu404, and Arg469. Active-site residues include His514 and Glu516.

It belongs to the CTP synthase family. In terms of assembly, homotetramer.

It catalyses the reaction UTP + L-glutamine + ATP + H2O = CTP + L-glutamate + ADP + phosphate + 2 H(+). The enzyme catalyses L-glutamine + H2O = L-glutamate + NH4(+). It carries out the reaction UTP + NH4(+) + ATP = CTP + ADP + phosphate + 2 H(+). It participates in pyrimidine metabolism; CTP biosynthesis via de novo pathway; CTP from UDP: step 2/2. Its activity is regulated as follows. Allosterically activated by GTP, when glutamine is the substrate; GTP has no effect on the reaction when ammonia is the substrate. The allosteric effector GTP functions by stabilizing the protein conformation that binds the tetrahedral intermediate(s) formed during glutamine hydrolysis. Inhibited by the product CTP, via allosteric rather than competitive inhibition. In terms of biological role, catalyzes the ATP-dependent amination of UTP to CTP with either L-glutamine or ammonia as the source of nitrogen. Regulates intracellular CTP levels through interactions with the four ribonucleotide triphosphates. In Brucella melitensis biotype 1 (strain ATCC 23456 / CCUG 17765 / NCTC 10094 / 16M), this protein is CTP synthase.